Here is a 40-residue protein sequence, read N- to C-terminus: Photosystem II reaction center protein J (40 aa).

The chain crosses the membrane as a helical span at residues 8–28 (IPLWLIGTVAGIAVIGLVGVF).

Belongs to the PsbJ family. PSII is composed of 1 copy each of membrane proteins PsbA, PsbB, PsbC, PsbD, PsbE, PsbF, PsbH, PsbI, PsbJ, PsbK, PsbL, PsbM, PsbT, PsbX, PsbY, PsbZ, Psb30/Ycf12, at least 3 peripheral proteins of the oxygen-evolving complex and a large number of cofactors. It forms dimeric complexes.

Its subcellular location is the plastid. The protein resides in the chloroplast thylakoid membrane. Its function is as follows. One of the components of the core complex of photosystem II (PSII). PSII is a light-driven water:plastoquinone oxidoreductase that uses light energy to abstract electrons from H(2)O, generating O(2) and a proton gradient subsequently used for ATP formation. It consists of a core antenna complex that captures photons, and an electron transfer chain that converts photonic excitation into a charge separation. The sequence is that of Photosystem II reaction center protein J from Secale cereale (Rye).